Here is a 466-residue protein sequence, read N- to C-terminus: Pentatricopeptide repeat-containing protein At4g01400, mitochondrial (466 aa).

The N-terminal 34 residues, 1 to 34 (MIRRPIYDFAAVFRHLTSPLSTSSRFLFYSSSEH), are a transit peptide targeting the mitochondrion. PPR repeat units lie at residues 118 to 152 (TGEIFTYLIKVYAEAKLPEKVLSTFYKMLEFNFTP), 153 to 188 (QPKHLNRILDVLVSHRGYLQKAFELFKSSRLHGVMP), 189 to 223 (NTRSYNLLMQAFCLNDDLSIAYQLFGKMLERDVVP), 224 to 258 (DVDSYKILIQGFCRKGQVNGAMELLDDMLNKGFVP), 259 to 293 (DRLSYTTLLNSLCRKTQLREAYKLLCRMKLKGCNP), 294 to 328 (DLVHYNTMILGFCREDRAMDARKVLDDMLSNGCSP), 329 to 363 (NSVSYRTLIGGLCDQGMFDEGKKYLEEMISKGFSP), and 364 to 398 (HFSVSNCLVKGFCSFGKVEEACDVVEVVMKNGETL).

Belongs to the PPR family. P subfamily.

It localises to the mitochondrion. This Arabidopsis thaliana (Mouse-ear cress) protein is Pentatricopeptide repeat-containing protein At4g01400, mitochondrial.